We begin with the raw amino-acid sequence, 370 residues long: Queuine tRNA-ribosyltransferase (370 aa).

The active-site Proton acceptor is the aspartate 89. Residues 89–93 (DSGGF), aspartate 143, glutamine 187, and glycine 214 each bind substrate. The RNA binding stretch occupies residues 245–251 (GVGTPED). Residue aspartate 264 is the Nucleophile of the active site. Residues 269-273 (TRNAR) form an RNA binding; important for wobble base 34 recognition region. Residues cysteine 302, cysteine 304, cysteine 307, and histidine 333 each contribute to the Zn(2+) site.

Belongs to the queuine tRNA-ribosyltransferase family. Homodimer. Within each dimer, one monomer is responsible for RNA recognition and catalysis, while the other monomer binds to the replacement base PreQ1. It depends on Zn(2+) as a cofactor.

The enzyme catalyses 7-aminomethyl-7-carbaguanine + guanosine(34) in tRNA = 7-aminomethyl-7-carbaguanosine(34) in tRNA + guanine. The protein operates within tRNA modification; tRNA-queuosine biosynthesis. Its function is as follows. Catalyzes the base-exchange of a guanine (G) residue with the queuine precursor 7-aminomethyl-7-deazaguanine (PreQ1) at position 34 (anticodon wobble position) in tRNAs with GU(N) anticodons (tRNA-Asp, -Asn, -His and -Tyr). Catalysis occurs through a double-displacement mechanism. The nucleophile active site attacks the C1' of nucleotide 34 to detach the guanine base from the RNA, forming a covalent enzyme-RNA intermediate. The proton acceptor active site deprotonates the incoming PreQ1, allowing a nucleophilic attack on the C1' of the ribose to form the product. After dissociation, two additional enzymatic reactions on the tRNA convert PreQ1 to queuine (Q), resulting in the hypermodified nucleoside queuosine (7-(((4,5-cis-dihydroxy-2-cyclopenten-1-yl)amino)methyl)-7-deazaguanosine). The sequence is that of Queuine tRNA-ribosyltransferase from Aromatoleum aromaticum (strain DSM 19018 / LMG 30748 / EbN1) (Azoarcus sp. (strain EbN1)).